The primary structure comprises 251 residues: Triosephosphate isomerase (251 aa).

Residues Asn-10 and Lys-12 each contribute to the substrate site. His-96 (electrophile) is an active-site residue. Catalysis depends on Glu-168, which acts as the Proton acceptor.

Belongs to the triosephosphate isomerase family. Homodimer.

The enzyme catalyses D-glyceraldehyde 3-phosphate = dihydroxyacetone phosphate. It functions in the pathway carbohydrate biosynthesis; gluconeogenesis. It participates in carbohydrate degradation; glycolysis; D-glyceraldehyde 3-phosphate from glycerone phosphate: step 1/1. This Aspergillus oryzae (strain ATCC 42149 / RIB 40) (Yellow koji mold) protein is Triosephosphate isomerase (tpiA).